The following is a 267-amino-acid chain: 3-methyl-2-oxobutanoate hydroxymethyltransferase (267 aa).

Residues aspartate 46 and aspartate 85 each coordinate Mg(2+). Residues 46 to 47, aspartate 85, and lysine 115 each bind 3-methyl-2-oxobutanoate; that span reads DS. A Mg(2+)-binding site is contributed by glutamate 117. The active-site Proton acceptor is glutamate 184.

It belongs to the PanB family. Homodecamer; pentamer of dimers. Mg(2+) serves as cofactor.

It is found in the cytoplasm. The catalysed reaction is 3-methyl-2-oxobutanoate + (6R)-5,10-methylene-5,6,7,8-tetrahydrofolate + H2O = 2-dehydropantoate + (6S)-5,6,7,8-tetrahydrofolate. It participates in cofactor biosynthesis; (R)-pantothenate biosynthesis; (R)-pantoate from 3-methyl-2-oxobutanoate: step 1/2. In terms of biological role, catalyzes the reversible reaction in which hydroxymethyl group from 5,10-methylenetetrahydrofolate is transferred onto alpha-ketoisovalerate to form ketopantoate. The protein is 3-methyl-2-oxobutanoate hydroxymethyltransferase of Citrifermentans bemidjiense (strain ATCC BAA-1014 / DSM 16622 / JCM 12645 / Bem) (Geobacter bemidjiensis).